Reading from the N-terminus, the 301-residue chain is Phosphatidylserine decarboxylase proenzyme (301 aa).

Active-site charge relay system; for autoendoproteolytic cleavage activity residues include aspartate 115, histidine 171, and serine 258. Serine 258 functions as the Schiff-base intermediate with substrate; via pyruvic acid; for decarboxylase activity in the catalytic mechanism. A Pyruvic acid (Ser); by autocatalysis modification is found at serine 258.

The protein belongs to the phosphatidylserine decarboxylase family. PSD-B subfamily. Prokaryotic type II sub-subfamily. Heterodimer of a large membrane-associated beta subunit and a small pyruvoyl-containing alpha subunit. Pyruvate serves as cofactor. Post-translationally, is synthesized initially as an inactive proenzyme. Formation of the active enzyme involves a self-maturation process in which the active site pyruvoyl group is generated from an internal serine residue via an autocatalytic post-translational modification. Two non-identical subunits are generated from the proenzyme in this reaction, and the pyruvate is formed at the N-terminus of the alpha chain, which is derived from the carboxyl end of the proenzyme. The autoendoproteolytic cleavage occurs by a canonical serine protease mechanism, in which the side chain hydroxyl group of the serine supplies its oxygen atom to form the C-terminus of the beta chain, while the remainder of the serine residue undergoes an oxidative deamination to produce ammonia and the pyruvoyl prosthetic group on the alpha chain. During this reaction, the Ser that is part of the protease active site of the proenzyme becomes the pyruvoyl prosthetic group, which constitutes an essential element of the active site of the mature decarboxylase.

Its subcellular location is the cell membrane. It carries out the reaction a 1,2-diacyl-sn-glycero-3-phospho-L-serine + H(+) = a 1,2-diacyl-sn-glycero-3-phosphoethanolamine + CO2. Its pathway is phospholipid metabolism; phosphatidylethanolamine biosynthesis; phosphatidylethanolamine from CDP-diacylglycerol: step 2/2. Its function is as follows. Catalyzes the formation of phosphatidylethanolamine (PtdEtn) from phosphatidylserine (PtdSer). This is Phosphatidylserine decarboxylase proenzyme from Chlamydia pneumoniae (Chlamydophila pneumoniae).